Consider the following 628-residue polypeptide: MVNPPQPRQMPKSPRLSTSTSSGPSAVPNLLGSPRPSPPQLQHQPSSASTSSTTSTATTGGSISATAPGSTQHYLHHHPSRKTSIVEILSSPPPLPTDPNDPIHQLSLSRHASTSSNKSSSQSIAPGSTAITNHAFSLVDWSEIPLTELTESNKLISIHSSHSVQSAFETLLKNNLTSVPVSISKSDPHDLTNCLTFDYSDLNTYLLLIMNKINYSELNVDDIGDPNISPQERHEFVTQTISKAKRGEEVPVEFIIKLHPKNPFIKFNETDTLFSVMETLGNGVHRIAITNEEGNKITGILSQRRLIKYMWENARRFPSLDFYLTSTLQDLKIGSSNPITIYEDQMLIEALHKMFNERVSSLAVIDRSRTLIGNISIVDVKNVTSSKNSHLLFKSVLNFISYNLSQKGIEEGQDQFPIFHVNNQTSLGRVIAKLVATQSHRLWIVDSSRQASSMSSASASAPNSGMNNGVTVGYPAPADSSITDKAEEVEASSMSSPQLNAAAAAAAAVATGAPTTATSAQPDFSYTSGTGKLVGVVTLTDILGLFATSKGRRTDPQAARNQRRRSSTSTTRSSIDSALSAEGILPSGSAIIGSSNAANTGRRGSVEVSSDVFRKSYTKAQENAFSKE.

The disordered stretch occupies residues 1–126 (MVNPPQPRQM…NKSSSQSIAP (126 aa)). Positions 15 to 24 (RLSTSTSSGP) are enriched in polar residues. Composition is skewed to low complexity over residues 40–71 (QLQH…PGST) and 109–123 (SRHA…SSQS). 2 CBS domains span residues 258–319 (LHPK…RFPS) and 334–392 (GSSN…SHLL). Residues 551–609 (GRRTDPQAARNQRRRSSTSTTRSSIDSALSAEGILPSGSAIIGSSNAANTGRRGSVEVS) are disordered. The segment covering 587–599 (SGSAIIGSSNAAN) has biased composition (low complexity).

The protein belongs to the SDS23 family.

It localises to the cytoplasm. Its subcellular location is the nucleus. In terms of biological role, involved in DNA replication and cell separation. The polypeptide is Protein SDS23 (SDS24) (Candida albicans (strain SC5314 / ATCC MYA-2876) (Yeast)).